Consider the following 267-residue polypeptide: Small ribosomal subunit protein uS10m (267 aa).

A mitochondrion-targeting transit peptide spans 1 to 10 (MLSRILGVRN).

The protein belongs to the universal ribosomal protein uS10 family. As to quaternary structure, part of the mitochondrial small ribosomal subunit.

The protein localises to the mitochondrion. In terms of biological role, involved in mitochondrial genome encoded proteins translation. Involved in the binding of tRNA to the ribosomes. The protein is Small ribosomal subunit protein uS10m (RSM10) of Debaryomyces hansenii (strain ATCC 36239 / CBS 767 / BCRC 21394 / JCM 1990 / NBRC 0083 / IGC 2968) (Yeast).